The primary structure comprises 178 residues: Probetacellulin (178 aa).

A signal peptide spans 1-31 (MARAAPGSGASPLPLLPALALGLVILHCVVA). The Extracellular segment spans residues 32–118 (DGNSTRSPED…LFYLRGDRGQ (87 aa)). The N-linked (GlcNAc...) asparagine glycan is linked to Asn34. One can recognise an EGF-like domain in the interval 65–105 (HFSRCPKQYKHYCIKGRCRFVVAEQTPSCVCDEGYAGARCE). 3 disulfide bridges follow: Cys69–Cys82, Cys77–Cys93, and Cys95–Cys104. The propeptide at 112-178 (LRGDRGQILV…NDDIQETSIA (67 aa)) is removed in mature form. A helical transmembrane segment spans residues 119 to 139 (ILVICLIAVMVIFIILVVSIC). The Cytoplasmic segment spans residues 140–178 (TCCHPLRKRRKRRKKEEEMETLGKDITPINDDIQETSIA).

As to quaternary structure, monomer. Interacts with EGFR and ERBB4. In terms of tissue distribution, expressed in a wide range of tissues, including the mammary gland.

It localises to the secreted. It is found in the extracellular space. The protein localises to the cell membrane. Functionally, growth factor that binds to EGFR, ERBB4 and other EGF receptor family members. Potent mitogen for retinal pigment epithelial cells and vascular smooth muscle cells. The sequence is that of Probetacellulin (BTC) from Bos taurus (Bovine).